Here is a 251-residue protein sequence, read N- to C-terminus: 1-(5-phosphoribosyl)-5-[(5-phosphoribosylamino)methylideneamino] imidazole-4-carboxamide isomerase (251 aa).

D8 acts as the Proton acceptor in catalysis. D131 (proton donor) is an active-site residue.

It belongs to the HisA/HisF family.

The protein resides in the cytoplasm. It catalyses the reaction 1-(5-phospho-beta-D-ribosyl)-5-[(5-phospho-beta-D-ribosylamino)methylideneamino]imidazole-4-carboxamide = 5-[(5-phospho-1-deoxy-D-ribulos-1-ylimino)methylamino]-1-(5-phospho-beta-D-ribosyl)imidazole-4-carboxamide. The protein operates within amino-acid biosynthesis; L-histidine biosynthesis; L-histidine from 5-phospho-alpha-D-ribose 1-diphosphate: step 4/9. The sequence is that of 1-(5-phosphoribosyl)-5-[(5-phosphoribosylamino)methylideneamino] imidazole-4-carboxamide isomerase from Burkholderia pseudomallei (strain 1710b).